Here is a 333-residue protein sequence, read N- to C-terminus: Succinylglutamate desuccinylase (333 aa).

Positions 56, 59, and 149 each coordinate Zn(2+). The active site involves glutamate 214.

The protein belongs to the AspA/AstE family. Succinylglutamate desuccinylase subfamily. Zn(2+) serves as cofactor.

The catalysed reaction is N-succinyl-L-glutamate + H2O = L-glutamate + succinate. It participates in amino-acid degradation; L-arginine degradation via AST pathway; L-glutamate and succinate from L-arginine: step 5/5. Functionally, transforms N(2)-succinylglutamate into succinate and glutamate. This is Succinylglutamate desuccinylase from Chromobacterium violaceum (strain ATCC 12472 / DSM 30191 / JCM 1249 / CCUG 213 / NBRC 12614 / NCIMB 9131 / NCTC 9757 / MK).